Reading from the N-terminus, the 397-residue chain is Phosphoglycerate kinase (397 aa).

Substrate is bound by residues 25-27 (DLN), R41, 64-67 (HLGR), R118, and R151. Residues K202, E324, and 350 to 353 (GGDT) contribute to the ATP site.

This sequence belongs to the phosphoglycerate kinase family. As to quaternary structure, monomer.

It is found in the cytoplasm. It carries out the reaction (2R)-3-phosphoglycerate + ATP = (2R)-3-phospho-glyceroyl phosphate + ADP. The protein operates within carbohydrate degradation; glycolysis; pyruvate from D-glyceraldehyde 3-phosphate: step 2/5. The polypeptide is Phosphoglycerate kinase (Paracidovorax citrulli (strain AAC00-1) (Acidovorax citrulli)).